The primary structure comprises 488 residues: Katanin p60 ATPase-containing subunit A-like 1 (488 aa).

N-acetylmethionine is present on Met1. The segment at 128-179 (GAGARGLVGRAHQISKSDKAASRDKDYRARGRDDKARKNMQDGASDGEIPKF) is disordered. Over residues 142-167 (SKSDKAASRDKDYRARGRDDKARKNM) the composition is skewed to basic and acidic residues. Residue Ser172 is modified to Phosphoserine. 246–253 (GPPGTGKT) lines the ATP pocket.

Belongs to the AAA ATPase family. Katanin p60 subunit A1 subfamily. A-like 1 sub-subfamily. As to quaternary structure, interacts with KATNB1 and KATNBL1.

The protein localises to the cytoplasm. Its subcellular location is the cytoskeleton. It localises to the spindle pole. The protein resides in the spindle. It carries out the reaction n ATP + n H2O + a microtubule = n ADP + n phosphate + (n+1) alpha/beta tubulin heterodimers.. Its function is as follows. Regulates microtubule dynamics in Sertoli cells, a process that is essential for spermiogenesis and male fertility. Severs microtubules in an ATP-dependent manner, promoting rapid reorganization of cellular microtubule arrays. Has microtubule-severing activity in vitro. The protein is Katanin p60 ATPase-containing subunit A-like 1 (Katnal1) of Rattus norvegicus (Rat).